The chain runs to 457 residues: Probable ubiquitin carboxyl-terminal hydrolase 16 (457 aa).

Positions 34 to 97 (VSSPSVPEGT…DGANDFVDED (64 aa)) are disordered. Positions 45–67 (TVLNNPKQSTVSRKSFSAPTSPT) are enriched in polar residues. Position 61 is a phosphoserine (Ser61). Thr64 is modified (phosphothreonine). Phosphoserine is present on Ser65. The USP domain maps to 125–429 (PGLVNLGNTC…QAYILQYKRK (305 aa)). Cys134 serves as the catalytic Nucleophile. His388 acts as the Proton acceptor in catalysis. The segment at 434 to 457 (SKHKLNTENTVTKTSNKKRRKISF) is disordered. Over residues 448 to 457 (SNKKRRKISF) the composition is skewed to basic residues.

Belongs to the peptidase C19 family.

The enzyme catalyses Thiol-dependent hydrolysis of ester, thioester, amide, peptide and isopeptide bonds formed by the C-terminal Gly of ubiquitin (a 76-residue protein attached to proteins as an intracellular targeting signal).. The sequence is that of Probable ubiquitin carboxyl-terminal hydrolase 16 (ubp16) from Schizosaccharomyces pombe (strain 972 / ATCC 24843) (Fission yeast).